The following is a 1173-amino-acid chain: Ubiquitin conjugation factor E4 B (1173 aa).

The residue at position 1 (M1) is an N-acetylmethionine. The segment at 1-155 (MEELSADEIR…EPSSGPEVSE (155 aa)) is disordered. Residues 16–33 (RLAGGQTSQPTTPLTSPQ) show a composition bias toward low complexity. A phosphoserine mark is found at S23 and S31. Positions 51–64 (QSLGLNVHNMTPAT) are enriched in polar residues. The span at 76 to 99 (SQSSEGVSSLSSSPSNSLETQSQS) shows a compositional bias: low complexity. 7 positions are modified to phosphoserine: S84, S88, S90, S101, S103, S105, and S124. Positions 134–147 (NDRREKRSLSDKEP) are enriched in basic and acidic residues. 3 positions are modified to phosphoserine: S238, S674, and S840. Residues 928–948 (NKEQWDQLPRDQQQARQSQLA) are disordered. Residues 937-948 (RDQQQARQSQLA) show a composition bias toward low complexity. Residues 1098 to 1171 (DAPDEFRDPL…QAWMREKQSS (74 aa)) enclose the U-box domain. Position 1136 is a phosphoserine (S1136).

This sequence belongs to the ubiquitin conjugation factor E4 family. Interacts with VCP. Interacts with STUB1/CHIP and UNC45B. Post-translationally, proteolytically cleaved by caspases during apoptosis. Cleaved efficiently at Asp-123 by caspase-6 and granzyme B. Cleaved with approximately 10-fold less efficiency at Asp-109 by caspase-3 and caspase-7. Expressed predominantly in neuronal tissues. Also detected in liver, heart, brain, kidney and testis.

Its subcellular location is the cytoplasm. The protein localises to the nucleus. The catalysed reaction is S-ubiquitinyl-[E2 ubiquitin-conjugating enzyme]-L-cysteine + [acceptor protein]-L-lysine = [E2 ubiquitin-conjugating enzyme]-L-cysteine + N(6)-ubiquitinyl-[acceptor protein]-L-lysine.. The protein operates within protein modification; protein ubiquitination. Functionally, ubiquitin-protein ligase that probably functions as an E3 ligase in conjunction with specific E1 and E2 ligases. May also function as an E4 ligase mediating the assembly of polyubiquitin chains on substrates ubiquitinated by another E3 ubiquitin ligase. May regulate myosin assembly in striated muscles together with STUB1 and VCP/p97 by targeting myosin chaperone UNC45B for proteasomal degradation. The protein is Ubiquitin conjugation factor E4 B of Mus musculus (Mouse).